Reading from the N-terminus, the 242-residue chain is Uridylate kinase (242 aa).

12–15 contributes to the ATP binding site; it reads KLSG. The tract at residues 20-25 is involved in allosteric activation by GTP; it reads GNDGFG. G54 lines the UMP pocket. 2 residues coordinate ATP: G55 and R59. UMP contacts are provided by residues D74 and 135-142; that span reads TGNPYFST. N163, Y169, and D172 together coordinate ATP.

It belongs to the UMP kinase family. Homohexamer.

The protein resides in the cytoplasm. The catalysed reaction is UMP + ATP = UDP + ADP. Its pathway is pyrimidine metabolism; CTP biosynthesis via de novo pathway; UDP from UMP (UMPK route): step 1/1. With respect to regulation, allosterically activated by GTP. Inhibited by UTP. Catalyzes the reversible phosphorylation of UMP to UDP. This Listeria innocua serovar 6a (strain ATCC BAA-680 / CLIP 11262) protein is Uridylate kinase.